Consider the following 338-residue polypeptide: Phenylalanine--tRNA ligase alpha subunit (338 aa).

Mg(2+) is bound at residue E252.

This sequence belongs to the class-II aminoacyl-tRNA synthetase family. Phe-tRNA synthetase alpha subunit type 1 subfamily. In terms of assembly, tetramer of two alpha and two beta subunits. Requires Mg(2+) as cofactor.

The protein resides in the cytoplasm. It carries out the reaction tRNA(Phe) + L-phenylalanine + ATP = L-phenylalanyl-tRNA(Phe) + AMP + diphosphate + H(+). This is Phenylalanine--tRNA ligase alpha subunit from Pseudomonas putida (strain ATCC 700007 / DSM 6899 / JCM 31910 / BCRC 17059 / LMG 24140 / F1).